Consider the following 467-residue polypeptide: L-seryl-tRNA(Sec) selenium transferase (467 aa).

Lys298 carries the N6-(pyridoxal phosphate)lysine modification.

This sequence belongs to the SelA family. Pyridoxal 5'-phosphate is required as a cofactor.

The protein resides in the cytoplasm. The enzyme catalyses L-seryl-tRNA(Sec) + selenophosphate + H(+) = L-selenocysteinyl-tRNA(Sec) + phosphate. The protein operates within aminoacyl-tRNA biosynthesis; selenocysteinyl-tRNA(Sec) biosynthesis; selenocysteinyl-tRNA(Sec) from L-seryl-tRNA(Sec) (bacterial route): step 1/1. Its function is as follows. Converts seryl-tRNA(Sec) to selenocysteinyl-tRNA(Sec) required for selenoprotein biosynthesis. This chain is L-seryl-tRNA(Sec) selenium transferase, found in Alkaliphilus oremlandii (strain OhILAs) (Clostridium oremlandii (strain OhILAs)).